The chain runs to 325 residues: ATP phosphoribosyltransferase (325 aa).

This sequence belongs to the ATP phosphoribosyltransferase family. Long subfamily. Requires Mg(2+) as cofactor.

It is found in the cytoplasm. The enzyme catalyses 1-(5-phospho-beta-D-ribosyl)-ATP + diphosphate = 5-phospho-alpha-D-ribose 1-diphosphate + ATP. Its pathway is amino-acid biosynthesis; L-histidine biosynthesis; L-histidine from 5-phospho-alpha-D-ribose 1-diphosphate: step 1/9. With respect to regulation, feedback inhibited by histidine. Its function is as follows. Catalyzes the condensation of ATP and 5-phosphoribose 1-diphosphate to form N'-(5'-phosphoribosyl)-ATP (PR-ATP). Has a crucial role in the pathway because the rate of histidine biosynthesis seems to be controlled primarily by regulation of HisG enzymatic activity. The sequence is that of ATP phosphoribosyltransferase from Rhodopseudomonas palustris (strain BisB18).